Reading from the N-terminus, the 388-residue chain is Succinate--CoA ligase [ADP-forming] subunit beta (388 aa).

Residues 9–244 (KQLFARYGLP…HSQEDEREAH (236 aa)) form the ATP-grasp domain. Residues Lys-46, 53–55 (GRG), Glu-99, Thr-102, and Glu-107 contribute to the ATP site. Residues Asn-199 and Asp-213 each coordinate Mg(2+). Substrate is bound by residues Asn-264 and 321 to 323 (GIV).

Belongs to the succinate/malate CoA ligase beta subunit family. As to quaternary structure, heterotetramer of two alpha and two beta subunits. The cofactor is Mg(2+).

The enzyme catalyses succinate + ATP + CoA = succinyl-CoA + ADP + phosphate. The catalysed reaction is GTP + succinate + CoA = succinyl-CoA + GDP + phosphate. It functions in the pathway carbohydrate metabolism; tricarboxylic acid cycle; succinate from succinyl-CoA (ligase route): step 1/1. In terms of biological role, succinyl-CoA synthetase functions in the citric acid cycle (TCA), coupling the hydrolysis of succinyl-CoA to the synthesis of either ATP or GTP and thus represents the only step of substrate-level phosphorylation in the TCA. The beta subunit provides nucleotide specificity of the enzyme and binds the substrate succinate, while the binding sites for coenzyme A and phosphate are found in the alpha subunit. The chain is Succinate--CoA ligase [ADP-forming] subunit beta from Sodalis glossinidius (strain morsitans).